The sequence spans 447 residues: uncharacterized protein (447 aa).

4 residues coordinate [4Fe-4S] cluster: C87, C93, C96, and C162. Residues Q284, Y313, E334, and D375 each coordinate S-adenosyl-L-methionine. C402 functions as the Nucleophile in the catalytic mechanism.

It belongs to the class I-like SAM-binding methyltransferase superfamily. RNA M5U methyltransferase family.

This is an uncharacterized protein from Nanoarchaeum equitans (strain Kin4-M).